A 130-amino-acid polypeptide reads, in one-letter code: Small ribosomal subunit protein uS11 (130 aa).

The protein belongs to the universal ribosomal protein uS11 family. In terms of assembly, part of the 30S ribosomal subunit. Interacts with proteins S7 and S18. Binds to IF-3.

In terms of biological role, located on the platform of the 30S subunit, it bridges several disparate RNA helices of the 16S rRNA. Forms part of the Shine-Dalgarno cleft in the 70S ribosome. The protein is Small ribosomal subunit protein uS11 of Campylobacter fetus subsp. fetus (strain 82-40).